A 159-amino-acid polypeptide reads, in one-letter code: Cyclic pyranopterin monophosphate synthase (159 aa).

Residues Leu75–His77 and Met113–Glu114 contribute to the substrate site. Asp128 is an active-site residue.

This sequence belongs to the MoaC family. As to quaternary structure, homohexamer; trimer of dimers.

The catalysed reaction is (8S)-3',8-cyclo-7,8-dihydroguanosine 5'-triphosphate = cyclic pyranopterin phosphate + diphosphate. Its pathway is cofactor biosynthesis; molybdopterin biosynthesis. Catalyzes the conversion of (8S)-3',8-cyclo-7,8-dihydroguanosine 5'-triphosphate to cyclic pyranopterin monophosphate (cPMP). The sequence is that of Cyclic pyranopterin monophosphate synthase from Serratia proteamaculans (strain 568).